Consider the following 446-residue polypeptide: Tetratricopeptide repeat protein 23 (446 aa).

4 TPR repeats span residues 45 to 78 (LHLC…TKIC), 137 to 170 (LELF…SKEM), 186 to 219 (SRIK…TETT), and 356 to 389 (AETY…ETFL).

As to quaternary structure, associated with the EvC complex composed of EFCAB7, IQCE, EVC2 and EVC.

Its subcellular location is the cell projection. The protein resides in the cilium. In terms of biological role, participates positively in the ciliary Hedgehog (Hh) signaling. This is Tetratricopeptide repeat protein 23 (Ttc23) from Rattus norvegicus (Rat).